Reading from the N-terminus, the 85-residue chain is Homeobox protein knotted-1-like 4 (85 aa).

Residues 1–21 (ELKYQLLKKYSGYLSSLRQEF) form the ELK domain. The homeobox; TALE-type DNA-binding region spans 22 to 85 (SKKKKKGKLP…NQRKRHWKPS (64 aa)).

Belongs to the TALE/KNOX homeobox family. As to expression, strongly expressed in ear inflorescence primordia and shoot meristem. Weakly expressed in embryos. Absent from leaves.

It localises to the nucleus. Its function is as follows. Probably binds to the DNA sequence 5'-TGAC-3'. The chain is Homeobox protein knotted-1-like 4 (KNOX4) from Zea mays (Maize).